The primary structure comprises 1544 residues: Zinc finger protein GLI2 (1544 aa).

The tract at residues 1 to 26 (METSAPAPALEKKEAKSGLLEDSSFP) is disordered. A phosphoserine mark is found at Ser-145, Ser-230, Ser-232, and Ser-238. The interval 338 to 364 (SSSSSNCLNDANQNKQNSESAVSSTVN) is disordered. Ser-385 bears the Phosphoserine; by DYRK2 mark. The C2H2-type 1 zinc-finger motif lies at 417 to 444 (TNCHWADCTKEYDTQEQLVHHINNEHIH). A C2H2-type 2; degenerate zinc finger spans residues 455–477 (QACTREQKPFKAQYMLVVHMRRH). C2H2-type zinc fingers lie at residues 483 to 507 (HKCT…LRSH), 513 to 538 (YVCE…NRTH), and 544 to 569 (YICK…KTVH). Disordered regions lie at residues 557–619 (DPSS…TSHT) and 635–682 (GLCQ…ALAD). The span at 569 to 585 (HGPDAHVTKKQRNDVHV) shows a compositional bias: basic and acidic residues. Residues 637–657 (CQSSPGAQSSCSSEPSPLGSA) show a composition bias toward low complexity. Ser-707 bears the Phosphoserine mark. Thr-708 carries the phosphothreonine modification. Lys-740 carries the N6-acetyllysine; by EP300 modification. Disordered stretches follow at residues 781–800 (SQLQ…AYTV), 805–861 (SGIS…PGLL), 908–963 (ALPG…RRPD), 995–1016 (VQSH…RPPS), 1166–1220 (FGQY…CLGM), and 1422–1457 (GGCP…VSST). Composition is skewed to polar residues over residues 790 to 800 (STSTMSSAYTV) and 805 to 814 (SGISPYFSSR). The segment covering 954 to 963 (RASDPVRRPD) has biased composition (basic and acidic residues). Phosphoserine; by DYRK2 is present on Ser-997. 3 stretches are compositionally biased toward polar residues: residues 997-1009 (SHPS…TRNA), 1173-1190 (NPQS…TQPH), and 1200-1209 (SRGSYTQQPR).

Belongs to the GLI C2H2-type zinc-finger protein family. Interacts with ZIC1 and ZIC2. Interacts with STK36. Interacts with SUFU; this inhibits transcriptional activation mediated by GLI2. Interacts (via C-terminal internal region) with FOXC1 (via N-terminus); this interaction is direct and increases GLI2 DNA-binding and transcriptional activity through a smoothened (SMO)-independent Hedgehog (Hh) signaling pathway. Post-translationally, phosphorylated in vitro by ULK3. Phosphorylated by DYRK2; this inhibits GLI2 transcription factor activity and promotes proteasomal degradation of GLI2. In terms of processing, acetylation at Lys-740 inhibits Hh target gene expression, probably by impeding entry into chromatin thus preventing promoter occupancy.

The protein resides in the nucleus. Its subcellular location is the cytoplasm. It is found in the cell projection. It localises to the cilium. In terms of biological role, functions as a transcription regulator in the hedgehog (Hh) pathway. Functions as a transcriptional activator. May also function as transcriptional repressor. Requires STK36 for full transcriptional activator activity. Binds to the DNA sequence 5'-GAACCACCCA-3' which is part of the TRE-2S regulatory element. Is involved in the smoothened (SHH) signaling pathway. Required for normal skeleton development. The sequence is that of Zinc finger protein GLI2 from Mus musculus (Mouse).